We begin with the raw amino-acid sequence, 309 residues long: Anamorsin (309 aa).

The interval 6–172 (ISPGQLVAVF…KPNFEVGSSS (167 aa)) is N-terminal SAM-like domain. The tract at residues 173–222 (QLKLLHKKSSSVKPVVDPATAKLWTLSANDMEDDSMDLIDSDELLDPEDL) is linker. A phosphoserine mark is found at S182, S183, and S213. Residues C235, C244, C247, and C249 each contribute to the [2Fe-2S] cluster site. The interval 235–249 (CGEGKKRKACKNCTC) is fe-S binding site A. S269 carries the post-translational modification Phosphoserine. The [4Fe-4S] cluster site is built by C271, C274, C282, and C285. 2 consecutive short sequence motifs (cx2C motif) follow at residues 271-274 (CGNC) and 282-285 (CANC). The fe-S binding site B stretch occupies residues 271–285 (CGNCYLGDAFRCANC). 2 positions are modified to phosphoserine: S302 and S304.

It belongs to the anamorsin family. In terms of assembly, monomer. Interacts with NDOR1. Interacts with CHCHD4. [2Fe-2S] cluster is required as a cofactor. The cofactor is [4Fe-4S] cluster.

It localises to the cytoplasm. The protein resides in the nucleus. It is found in the mitochondrion intermembrane space. Functionally, component of the cytosolic iron-sulfur (Fe-S) protein assembly (CIA) machinery required for the maturation of extramitochondrial Fe-S proteins. Part of an electron transfer chain functioning in an early step of cytosolic Fe-S biogenesis, facilitating the de novo assembly of a [4Fe-4S] cluster on the scaffold complex NUBP1-NUBP2. Electrons are transferred to CIAPIN1 from NADPH via the FAD- and FMN-containing protein NDOR1. NDOR1-CIAPIN1 are also required for the assembly of the diferric tyrosyl radical cofactor of ribonucleotide reductase (RNR), probably by providing electrons for reduction during radical cofactor maturation in the catalytic small subunit. Has anti-apoptotic effects in the cell. Involved in negative control of cell death upon cytokine withdrawal. Promotes development of hematopoietic cells. The chain is Anamorsin from Rattus norvegicus (Rat).